The sequence spans 319 residues: UDP-3-O-acylglucosamine N-acyltransferase (319 aa).

The active-site Proton acceptor is H230.

The protein belongs to the transferase hexapeptide repeat family. LpxD subfamily. Homotrimer.

The enzyme catalyses a UDP-3-O-[(3R)-3-hydroxyacyl]-alpha-D-glucosamine + a (3R)-hydroxyacyl-[ACP] = a UDP-2-N,3-O-bis[(3R)-3-hydroxyacyl]-alpha-D-glucosamine + holo-[ACP] + H(+). The protein operates within bacterial outer membrane biogenesis; LPS lipid A biosynthesis. In terms of biological role, catalyzes the N-acylation of UDP-3-O-acylglucosamine using 3-hydroxyacyl-ACP as the acyl donor. Is involved in the biosynthesis of lipid A, a phosphorylated glycolipid that anchors the lipopolysaccharide to the outer membrane of the cell. This Campylobacter lari (strain RM2100 / D67 / ATCC BAA-1060) protein is UDP-3-O-acylglucosamine N-acyltransferase.